Here is a 155-residue protein sequence, read N- to C-terminus: Transcription antitermination protein NusB (155 aa).

Belongs to the NusB family.

Its function is as follows. Involved in transcription antitermination. Required for transcription of ribosomal RNA (rRNA) genes. Binds specifically to the boxA antiterminator sequence of the ribosomal RNA (rrn) operons. The protein is Transcription antitermination protein NusB of Vibrio vulnificus (strain CMCP6).